The primary structure comprises 184 residues: Protein FAM89A (184 aa).

The interval 148–184 is disordered; it reads YFQEQNSLHDRRDRGPPRDLSLPVSSLSSSDWILESI. A compositionally biased stretch (basic and acidic residues) spans 154–164; it reads SLHDRRDRGPP. A compositionally biased stretch (low complexity) spans 167-184; the sequence is LSLPVSSLSSSDWILESI.

This sequence belongs to the FAM89 family.

In Homo sapiens (Human), this protein is Protein FAM89A (FAM89A).